A 106-amino-acid polypeptide reads, in one-letter code: uncharacterized protein (106 aa).

A signal peptide spans 1-31 (MNNERLMLKGIFLGAAAGAALSLLHKPTRQA). A coiled-coil region spans residues 57–89 (VITKVDEAKKLARTLSKEVDFVNQQVKELKKTT).

This is an uncharacterized protein from Bacillus subtilis (strain 168).